The primary structure comprises 215 residues: Ribonuclease T (215 aa).

In terms of domain architecture, Exonuclease spans 20 to 194 (VVIDVETAGF…YDTERTAVLF (175 aa)). Mg(2+)-binding residues include D23, E25, H181, and D186. H181 serves as the catalytic Proton donor/acceptor.

Belongs to the RNase T family. In terms of assembly, homodimer. Mg(2+) serves as cofactor.

Functionally, trims short 3' overhangs of a variety of RNA species, leaving a one or two nucleotide 3' overhang. Responsible for the end-turnover of tRNA: specifically removes the terminal AMP residue from uncharged tRNA (tRNA-C-C-A). Also appears to be involved in tRNA biosynthesis, especially in strains lacking other exoribonucleases. A general regulator of small RNAs (sRNA), contributes to their degradation. Upon overexpression suppresses sRNA-mediated RhyB-silencing of multiple RNA targets; overexpression leads to nearly complete loss of RhyB sRNA. This is Ribonuclease T from Escherichia coli (strain K12).